Here is a 699-residue protein sequence, read N- to C-terminus: Fervidolysin (699 aa).

The signal sequence occupies residues 1–21 (MRKVLLIASIVALILALFSCA). Residues 22 to 149 (NPSFEPRSKA…MYKIRKPGLN (128 aa)) constitute a propeptide that is removed on maturation. Residue glutamate 157 participates in Ca(2+) binding. Residues 163–465 (LWGLEAIGVT…YGLVKLDAAL (303 aa)) form the Peptidase S8 domain. The Charge relay system role is filled by aspartate 190. Aspartate 199 lines the Ca(2+) pocket. Catalysis depends on histidine 228, which acts as the Charge relay system. Residues lysine 239, aspartate 241, lysine 243, and isoleucine 245 each contribute to the Ca(2+) site. The Charge relay system role is filled by serine 409.

It belongs to the peptidase S8 family. In terms of processing, undergoes auto-proteolytic processing. Once cleaved, the propeptide can remain associated with the protease and blocks its activity. The physiological activation of fervidolysin is proposed to be achieved through the stepwise removal of the propeptide accomplished by several proteolytic cleavages that may not be autolytic.

Its subcellular location is the cell surface. With respect to regulation, is inhibited by phenylmethylsulfonyl fluoride and 3,4-dichloroisocoumarin. EDTA and iodoacetate (1 to 5 mM) have only little effect on the enzyme activity. Protease able to degrade keratin into peptides. Is responsible for keratinolysis by F.pennivorans, which allows this bacterium to grow on native feathers. This Fervidobacterium pennivorans protein is Fervidolysin.